An 89-amino-acid polypeptide reads, in one-letter code: Small ribosomal subunit protein uS15 (89 aa).

The protein belongs to the universal ribosomal protein uS15 family. In terms of assembly, part of the 30S ribosomal subunit. Forms a bridge to the 50S subunit in the 70S ribosome, contacting the 23S rRNA.

In terms of biological role, one of the primary rRNA binding proteins, it binds directly to 16S rRNA where it helps nucleate assembly of the platform of the 30S subunit by binding and bridging several RNA helices of the 16S rRNA. Functionally, forms an intersubunit bridge (bridge B4) with the 23S rRNA of the 50S subunit in the ribosome. This is Small ribosomal subunit protein uS15 from Acholeplasma laidlawii (strain PG-8A).